The primary structure comprises 225 residues: Holliday junction branch migration complex subunit RuvA (225 aa).

The tract at residues 1–71 (MISWISGELV…EDSDLLFGFS (71 aa)) is domain I. Residues 72-150 (SKDQKNFFIE…NELKIQEEKS (79 aa)) are domain II. The flexible linker stretch occupies residues 151–161 (KDEFHIKDNKI). The segment at 161–225 (INKIVSDIEL…LDNDSSNIVR (65 aa)) is domain III.

It belongs to the RuvA family. In terms of assembly, homotetramer. Forms an RuvA(8)-RuvB(12)-Holliday junction (HJ) complex. HJ DNA is sandwiched between 2 RuvA tetramers; dsDNA enters through RuvA and exits via RuvB. An RuvB hexamer assembles on each DNA strand where it exits the tetramer. Each RuvB hexamer is contacted by two RuvA subunits (via domain III) on 2 adjacent RuvB subunits; this complex drives branch migration. In the full resolvosome a probable DNA-RuvA(4)-RuvB(12)-RuvC(2) complex forms which resolves the HJ.

Its subcellular location is the cytoplasm. In terms of biological role, the RuvA-RuvB-RuvC complex processes Holliday junction (HJ) DNA during genetic recombination and DNA repair, while the RuvA-RuvB complex plays an important role in the rescue of blocked DNA replication forks via replication fork reversal (RFR). RuvA specifically binds to HJ cruciform DNA, conferring on it an open structure. The RuvB hexamer acts as an ATP-dependent pump, pulling dsDNA into and through the RuvAB complex. HJ branch migration allows RuvC to scan DNA until it finds its consensus sequence, where it cleaves and resolves the cruciform DNA. This Prochlorococcus marinus (strain MIT 9312) protein is Holliday junction branch migration complex subunit RuvA.